The following is a 131-amino-acid chain: Large ribosomal subunit protein bL17 (131 aa).

Belongs to the bacterial ribosomal protein bL17 family. As to quaternary structure, part of the 50S ribosomal subunit. Contacts protein L32.

The protein is Large ribosomal subunit protein bL17 of Thermotoga sp. (strain RQ2).